Reading from the N-terminus, the 138-residue chain is uncharacterized protein (138 aa).

The disordered stretch occupies residues Asp89 to Glu138.

This is an uncharacterized protein from Treponema pallidum (strain Nichols).